Reading from the N-terminus, the 362-residue chain is MNVHVKTADQTPSTVQAQDALAILSAWASEASADQIDALDPGIARLVRVQAYPDLRAEYPGDFTVDEAYRATLPDLQNGPASLIKGANRRIQHVGISNFRLPIRYAVQDGSEVMLETSVTGTVSLEADQKGINMSRIMRSFYKHADASFGFDVIEAALDDYKADLGSFDARIQMRLSYPMKVDSLRSGLSGWQYYDIALELVERGGVRQRIVHLDYVYSSTCPCSLELSEHARATRGQLATPHSQRSVARISVELQGQGVWFEDLIEMARSGVPTETQVMVKREDEQAFAELNAANPIFVEDAARLFAEQLQAHSGVGDFRVMASHQESLHSHDAVSLLTEGDTFAEVSLDPKLFPSLIHVG.

The protein belongs to the GTP cyclohydrolase IV family.

It catalyses the reaction GTP + H2O = 7,8-dihydroneopterin 3'-triphosphate + formate + H(+). It functions in the pathway cofactor biosynthesis; 7,8-dihydroneopterin triphosphate biosynthesis; 7,8-dihydroneopterin triphosphate from GTP: step 1/1. In terms of biological role, converts GTP to 7,8-dihydroneopterin triphosphate. The protein is GTP cyclohydrolase FolE2 of Jannaschia sp. (strain CCS1).